A 187-amino-acid chain; its full sequence is Elongation factor P (187 aa).

This sequence belongs to the elongation factor P family.

Its subcellular location is the cytoplasm. The protein operates within protein biosynthesis; polypeptide chain elongation. Its function is as follows. Involved in peptide bond synthesis. Stimulates efficient translation and peptide-bond synthesis on native or reconstituted 70S ribosomes in vitro. Probably functions indirectly by altering the affinity of the ribosome for aminoacyl-tRNA, thus increasing their reactivity as acceptors for peptidyl transferase. The protein is Elongation factor P of Brachyspira hyodysenteriae (strain ATCC 49526 / WA1).